The chain runs to 176 residues: Respiratory supercomplex factor 1, mitochondrial (176 aa).

The HIG1 domain occupies 6–97 (VPSSFEGNPQ…TERQQRKEFE (92 aa)). 2 helical membrane passes run 33–49 (PLIPLGCAATSYALYRA) and 69–86 (IYAQFFTLIAVVVGGMYF). Positions 129-158 (RHAAMEAAAAEAGKKTAPHDAARSAIERSE) are disordered. Over residues 140 to 158 (AGKKTAPHDAARSAIERSE) the composition is skewed to basic and acidic residues.

This sequence belongs to the RCF1 family. Associates with the respiratory chain complex III/complex IV supercomplex.

It localises to the mitochondrion membrane. Its function is as follows. Cytochrome c oxidase subunit which plays a role in assembly of respiratory supercomplexes. The chain is Respiratory supercomplex factor 1, mitochondrial (rcf1) from Aspergillus flavus (strain ATCC 200026 / FGSC A1120 / IAM 13836 / NRRL 3357 / JCM 12722 / SRRC 167).